The primary structure comprises 296 residues: NADPH-dependent 1-acyldihydroxyacetone phosphate reductase (296 aa).

Isoleucine 9 is an NADP(+) binding site. The short motif at 11-15 (GCSEG) is the GXSXG element. NADP(+)-binding residues include threonine 35, arginine 41, aspartate 56, asparagine 84, lysine 117, tyrosine 148, lysine 152, valine 181, and threonine 183. Tyrosine 148 serves as the catalytic Proton donor. The active-site Lowers pKa of active site Tyr is the lysine 152.

The protein belongs to the short-chain dehydrogenases/reductases (SDR) family.

It is found in the lipid droplet. It localises to the cytoplasm. Its subcellular location is the vacuole. The protein localises to the endoplasmic reticulum. The protein resides in the golgi apparatus. It is found in the mitochondrion outer membrane. It catalyses the reaction 1-hexadecanoyl-sn-glycero-3-phosphate + NADP(+) = 1-hexadecanoylglycerone 3-phosphate + NADPH + H(+). The enzyme catalyses a 1-acylglycerone 3-phosphate + NADPH + H(+) = a 1-acyl-sn-glycero-3-phosphate + NADP(+). The catalysed reaction is a triacylglycerol + H2O = a diacylglycerol + a fatty acid + H(+). Its function is as follows. Can convert acyl and alkyl dihydroxyacetone-phosphate (DHAP) into glycerolipids and ether lipids, respectively. Required for the biosynthesis of phosphatidic acid via the DHAP pathway, where it reduces 1-acyl DHAP to lysophosphatidic acid (LPA). Also has triacylglycerol (TAG) lipase activity. Involved in the mobilization of the non-polar storage lipids triacylglycerols (TAGs) from lipid particles by hydrolysis of TAGs. Lipolysis of TAG by AYR1 is essential for starvation-induced autophagy. Forms an NADPH-regulated cation-selective channel in the mitochondrial outer membrane. This chain is NADPH-dependent 1-acyldihydroxyacetone phosphate reductase (ayr1), found in Schizosaccharomyces pombe (strain 972 / ATCC 24843) (Fission yeast).